An 875-amino-acid polypeptide reads, in one-letter code: MFFGDGGQLLSDKSLTGSAGGGNNRMKFNILPLAFFIGIIVSPARAELYFNRRFLSDDPDAVADLSAFTQGQELPPGVYRVDIYLNDTYISTRDVQFQMSQDGKQLAPCLSPEHMSAMGVNRYAVPGMERLPADTCTSLNSMIQGATFRFDVGQQRLYLTVPQLYMSNQARGYIAPEYWDNGITAALLNYDFSGNRVRDTYGGTSDYAYLNLKTGLNIGSWRLRDNTSWSYSAGKGYSQNNWQHINTWLERDIVSLRSRLTMGDSYTRGDIFDGVNFRGIQLASDDNMVPDSQRGYAPTIHGISRGTSRISIRQNGYEIYQSTLPPGPFEINDIYPAGSGGDLQVTLQEADGSVQRFNVPWSSVPVLQREGHLKYALSAGEFRSGGHQQDNPRFAEGTLKYGLPDGWTVYGGAWIAERYRAFNLGVGKNMGWLGAVSLDATRANARLPDESRHDGQSYRFLYNKSLTETGTNIQLIGYRYSTRGYFTFADTAWKKMSGYSVLTQDGVIQIQPKYTDYYNLAYNKREGAGEYQPADGESSTLYLSGSHQSYWGTDRTDRQLNAGFNSSVNDISWSLNYSLSRNAWQHETDRILSFDVSIPFSHWMRSDSTSAWRNASARYSQTLEAHGQAASTAGLYGTLLGDNNLGYSIQSGYTRGGYEGSSKTGYASLNYRGGYGNASAGYSHSGGYRQLYYGLSGGILAHANGLTLSQPLGDTLILVRAPGASDTRIENQTGVSTDWRGYAVLPYATDYRENRVALDTNTLADNVDIENTVVSVVPTHGAVVRADYKTRVGVKVLMTLMRNGKAVPFGSVVTARNGGSSIAGENGQVYLSGMPLSGQVSVKWGSQTTDQCTADYKLPKESAGQILSHVTASCR.

The signal sequence occupies residues methionine 1–glycine 38. Cysteine 852 and cysteine 874 are joined by a disulfide.

Belongs to the fimbrial export usher family.

It localises to the cell outer membrane. Its function is as follows. Involved in the export and assembly of the F1C fimbriae subunits across the outer membrane. This chain is Outer membrane usher protein FocD (focD), found in Escherichia coli.